Here is a 260-residue protein sequence, read N- to C-terminus: Thiazole synthase (260 aa).

Lys101 (schiff-base intermediate with DXP) is an active-site residue. 1-deoxy-D-xylulose 5-phosphate contacts are provided by residues Gly162, 188–189, and 210–211; these read AG and NT.

Belongs to the ThiG family. Homotetramer. Forms heterodimers with either ThiH or ThiS.

It is found in the cytoplasm. The catalysed reaction is [ThiS sulfur-carrier protein]-C-terminal-Gly-aminoethanethioate + 2-iminoacetate + 1-deoxy-D-xylulose 5-phosphate = [ThiS sulfur-carrier protein]-C-terminal Gly-Gly + 2-[(2R,5Z)-2-carboxy-4-methylthiazol-5(2H)-ylidene]ethyl phosphate + 2 H2O + H(+). The protein operates within cofactor biosynthesis; thiamine diphosphate biosynthesis. Its function is as follows. Catalyzes the rearrangement of 1-deoxy-D-xylulose 5-phosphate (DXP) to produce the thiazole phosphate moiety of thiamine. Sulfur is provided by the thiocarboxylate moiety of the carrier protein ThiS. In vitro, sulfur can be provided by H(2)S. This is Thiazole synthase from Acidithiobacillus ferrooxidans (strain ATCC 23270 / DSM 14882 / CIP 104768 / NCIMB 8455) (Ferrobacillus ferrooxidans (strain ATCC 23270)).